Consider the following 543-residue polypeptide: CTP synthase (543 aa).

Residues 1-265 (MARFIFITGG…DSEVLRAFGI (265 aa)) are amidoligase domain. Ser13 is a binding site for CTP. Ser13 is a UTP binding site. 14 to 19 (SLGKGL) contacts ATP. Tyr54 serves as a coordination point for L-glutamine. Asp71 provides a ligand contact to ATP. Residues Asp71 and Glu139 each coordinate Mg(2+). Residues 146–148 (DIE), 186–191 (KTKPTQ), and Lys222 each bind CTP. Residues 186–191 (KTKPTQ) and Lys222 contribute to the UTP site. The region spanning 291 to 542 (TIGVVGKYVS…IEAAVKQSRL (252 aa)) is the Glutamine amidotransferase type-1 domain. Residue Gly354 participates in L-glutamine binding. Cys381 functions as the Nucleophile; for glutamine hydrolysis in the catalytic mechanism. L-glutamine is bound by residues 382–385 (LGMQ), Glu405, and Arg470. Catalysis depends on residues His515 and Glu517.

The protein belongs to the CTP synthase family. As to quaternary structure, homotetramer.

It carries out the reaction UTP + L-glutamine + ATP + H2O = CTP + L-glutamate + ADP + phosphate + 2 H(+). It catalyses the reaction L-glutamine + H2O = L-glutamate + NH4(+). The enzyme catalyses UTP + NH4(+) + ATP = CTP + ADP + phosphate + 2 H(+). The protein operates within pyrimidine metabolism; CTP biosynthesis via de novo pathway; CTP from UDP: step 2/2. With respect to regulation, allosterically activated by GTP, when glutamine is the substrate; GTP has no effect on the reaction when ammonia is the substrate. The allosteric effector GTP functions by stabilizing the protein conformation that binds the tetrahedral intermediate(s) formed during glutamine hydrolysis. Inhibited by the product CTP, via allosteric rather than competitive inhibition. Its function is as follows. Catalyzes the ATP-dependent amination of UTP to CTP with either L-glutamine or ammonia as the source of nitrogen. Regulates intracellular CTP levels through interactions with the four ribonucleotide triphosphates. In Sphingopyxis alaskensis (strain DSM 13593 / LMG 18877 / RB2256) (Sphingomonas alaskensis), this protein is CTP synthase.